Reading from the N-terminus, the 165-residue chain is Cyclic pyranopterin monophosphate synthase (165 aa).

Residues 76 to 78 (LCH) and 114 to 115 (ME) contribute to the substrate site. Aspartate 129 is a catalytic residue.

The protein belongs to the MoaC family. As to quaternary structure, homohexamer; trimer of dimers.

It carries out the reaction (8S)-3',8-cyclo-7,8-dihydroguanosine 5'-triphosphate = cyclic pyranopterin phosphate + diphosphate. It functions in the pathway cofactor biosynthesis; molybdopterin biosynthesis. Its function is as follows. Catalyzes the conversion of (8S)-3',8-cyclo-7,8-dihydroguanosine 5'-triphosphate to cyclic pyranopterin monophosphate (cPMP). The protein is Cyclic pyranopterin monophosphate synthase of Brucella canis (strain ATCC 23365 / NCTC 10854 / RM-666).